The chain runs to 212 residues: Thymidylate kinase (212 aa).

ATP is bound at residue 11 to 18 (GMEGAGKS).

Belongs to the thymidylate kinase family.

The catalysed reaction is dTMP + ATP = dTDP + ADP. Phosphorylation of dTMP to form dTDP in both de novo and salvage pathways of dTTP synthesis. This Colwellia psychrerythraea (strain 34H / ATCC BAA-681) (Vibrio psychroerythus) protein is Thymidylate kinase.